The primary structure comprises 521 residues: Serine/threonine-protein kinase A (521 aa).

The 275-residue stretch at 15–289 folds into the Protein kinase domain; that stretch reads YQLVELVGSG…DVIIRAIDAI (275 aa). Residues 21-29 and K45 contribute to the ATP site; that span reads VGSGAMGQV. D148 (proton acceptor) is an active-site residue.

The protein belongs to the protein kinase superfamily. Ser/Thr protein kinase family. Autophosphorylated.

The catalysed reaction is L-seryl-[protein] + ATP = O-phospho-L-seryl-[protein] + ADP + H(+). It carries out the reaction L-threonyl-[protein] + ATP = O-phospho-L-threonyl-[protein] + ADP + H(+). Protein kinase that regulates cellular motility via phosphorylation of membrane proteins. This is Serine/threonine-protein kinase A (spkA) from Synechocystis sp. (strain ATCC 27184 / PCC 6803 / Kazusa).